The primary structure comprises 40 residues: Photosystem II reaction center protein J (40 aa).

The helical transmembrane segment at 8-28 (IPLWLIGTVTGIIVIGLLGIF) threads the bilayer.

This sequence belongs to the PsbJ family. As to quaternary structure, PSII is composed of 1 copy each of membrane proteins PsbA, PsbB, PsbC, PsbD, PsbE, PsbF, PsbH, PsbI, PsbJ, PsbK, PsbL, PsbM, PsbT, PsbX, PsbY, PsbZ, Psb30/Ycf12, at least 3 peripheral proteins of the oxygen-evolving complex and a large number of cofactors. It forms dimeric complexes.

It localises to the plastid. Its subcellular location is the chloroplast thylakoid membrane. Functionally, one of the components of the core complex of photosystem II (PSII). PSII is a light-driven water:plastoquinone oxidoreductase that uses light energy to abstract electrons from H(2)O, generating O(2) and a proton gradient subsequently used for ATP formation. It consists of a core antenna complex that captures photons, and an electron transfer chain that converts photonic excitation into a charge separation. This chain is Photosystem II reaction center protein J, found in Pinus koraiensis (Korean pine).